Consider the following 387-residue polypeptide: ERBB-3 BINDING PROTEIN 1 (387 aa).

Necessary for nucleolar localization stretches follow at residues 1 to 49 (MSDD…IVDL) and 297 to 387 (LLQP…PMEG). The tract at residues 47 to 55 (VDLCEKGDA) is RNA-binding. Positions 337–387 (LQPTKTTENEPEIKAWLALPTKTKKKGGGKKKKGKKGDKVEEASQAEPMEG) are disordered. Positions 356–373 (PTKTKKKGGGKKKKGKKG) are interaction with RNA. Basic residues predominate over residues 358-372 (KTKKKGGGKKKKGKK). A Nuclear localization signal motif is present at residues 360–369 (KKKGGGKKKK).

This sequence belongs to the peptidase M24 family. As to quaternary structure, component of a ribonucleoprotein complex. As to expression, expressed during tuberisation and in roots, nodes, internodes, petioles, leaves, stolons, tubers and sprouts.

Its subcellular location is the nucleus. Functionally, binds RNA. Associates with 28S, 18S and 5.8S mature rRNAs, several rRNA precursors and probably U3 small nucleolar RNA. May be involved in regulation of intermediate and late steps of rRNA processing. May be involved in ribosome assembly. Required for expression of cell cycle genes such as CYCD3-1, RNR2A and CDKB1-1. Promotes, in a dose- and auxin-dependent manner, organ growth by stimulating both cell proliferation and expansion, via the regulation of RBR1 levels. The polypeptide is ERBB-3 BINDING PROTEIN 1 (Solanum tuberosum (Potato)).